We begin with the raw amino-acid sequence, 181 residues long: Adenylyl-sulfate kinase (181 aa).

20–27 serves as a coordination point for ATP; that stretch reads GLSGAGKS. Ser-94 functions as the Phosphoserine intermediate in the catalytic mechanism.

This sequence belongs to the APS kinase family.

The catalysed reaction is adenosine 5'-phosphosulfate + ATP = 3'-phosphoadenylyl sulfate + ADP + H(+). It participates in sulfur metabolism; hydrogen sulfide biosynthesis; sulfite from sulfate: step 2/3. Catalyzes the synthesis of activated sulfate. The sequence is that of Adenylyl-sulfate kinase from Deinococcus deserti (strain DSM 17065 / CIP 109153 / LMG 22923 / VCD115).